We begin with the raw amino-acid sequence, 319 residues long: 4-diphosphocytidyl-2-C-methyl-D-erythritol kinase (319 aa).

Lysine 21 is a catalytic residue. Position 106 to 116 (106 to 116 (PIGAGLAGGSS)) interacts with ATP. Aspartate 148 is an active-site residue.

This sequence belongs to the GHMP kinase family. IspE subfamily.

The catalysed reaction is 4-CDP-2-C-methyl-D-erythritol + ATP = 4-CDP-2-C-methyl-D-erythritol 2-phosphate + ADP + H(+). It participates in isoprenoid biosynthesis; isopentenyl diphosphate biosynthesis via DXP pathway; isopentenyl diphosphate from 1-deoxy-D-xylulose 5-phosphate: step 3/6. Functionally, catalyzes the phosphorylation of the position 2 hydroxy group of 4-diphosphocytidyl-2C-methyl-D-erythritol. The polypeptide is 4-diphosphocytidyl-2-C-methyl-D-erythritol kinase (Prochlorococcus marinus (strain SARG / CCMP1375 / SS120)).